The primary structure comprises 124 residues: Small ribosomal subunit protein uS12 (124 aa).

The disordered stretch occupies residues 1–30; it reads MPTIQQLVRKGRRDKVAKVKTAALKGSPQR. The residue at position 89 (D89) is a 3-methylthioaspartic acid. The disordered stretch occupies residues 105–124; that stretch reads QGVKNRKQARSRYGAKKEKS. Residues 108 to 118 are compositionally biased toward basic residues; it reads KNRKQARSRYG.

This sequence belongs to the universal ribosomal protein uS12 family. As to quaternary structure, part of the 30S ribosomal subunit. Contacts proteins S8 and S17. May interact with IF1 in the 30S initiation complex.

With S4 and S5 plays an important role in translational accuracy. Functionally, interacts with and stabilizes bases of the 16S rRNA that are involved in tRNA selection in the A site and with the mRNA backbone. Located at the interface of the 30S and 50S subunits, it traverses the body of the 30S subunit contacting proteins on the other side and probably holding the rRNA structure together. The combined cluster of proteins S8, S12 and S17 appears to hold together the shoulder and platform of the 30S subunit. In Mycobacterium intracellulare, this protein is Small ribosomal subunit protein uS12.